The following is a 572-amino-acid chain: Na(+)/citrate cotransporter (572 aa).

8 helical membrane passes run 13-33, 53-73, 80-100, 124-144, 218-238, 255-275, 315-335, and 357-377; these read SFAILLFTPILMLPLVILIPD, VIPVAVTSLLPVLLFPLLKVL, IQYMKDTNMLFLGSLIVAVAV, LMLGFMFVTAFLSMWISNTAA, SASIGGTATLTGTGPNVVLLG, SWFGFAFPNMVMMLVLAWLWL, SLSYPECNVLFCFTLLVILWF, and HITDATVAIFVAILLFIIPSQ. N-linked (GlcNAc...) asparagine glycosylation is present at asparagine 382. The next 4 membrane-spanning stretches (helical) occupy residues 410–430, 443–463, 491–511, and 532–552; these read VPWDIVLLLGGGFAMAKGCET, PLRLVKPAVITLILSCLVAMT, PLYVMIPCTMSASLAFMLPVA, and TGLIMNFVGILSVFLSVNTWG. Asparagine 566 carries an N-linked (GlcNAc...) asparagine glycan.

The protein belongs to the SLC13A/DASS transporter (TC 2.A.47) family. NADC subfamily. Homodimer.

It is found in the cell membrane. It carries out the reaction citrate(out) + 4 Na(+)(out) = citrate(in) + 4 Na(+)(in). With respect to regulation, inhibited by Li(+). High-affinity sodium/citrate cotransporter that mediates citrate entry into cells, which is a critical participant of biochemical pathways. May function in various metabolic processes in which citrate has a critical role such as energy production (Krebs cycle), fatty acid synthesis, cholesterol synthesis, glycolysis, and gluconeogenesis. Transports citrate into the cell in a Na(+)-dependent manner, recognizing the trivalent form of citrate (physiological pH) rather than the divalent form. Can recognizes succinate as a substrate, but its affinity for succinate is several fold lower than for citrate. The stoichiometry is probably 4 Na(+) for each carboxylate, irrespective of whether the translocated substrate is divalent or trivalent, rendering the process electrogenic. Involved in the regulation of citrate levels in the brain. The sequence is that of Na(+)/citrate cotransporter (Slc13a5) from Mus musculus (Mouse).